We begin with the raw amino-acid sequence, 238 residues long: uncharacterized protein (238 aa).

Positions 219 to 238 (EESINNNVDDTDDIDNDNFI) are disordered. The span at 227–238 (DDTDDIDNDNFI) shows a compositional bias: acidic residues.

This is an uncharacterized protein from Buchnera aphidicola subsp. Acyrthosiphon pisum (strain APS) (Acyrthosiphon pisum symbiotic bacterium).